The sequence spans 405 residues: Na(+)-translocating NADH-quinone reductase subunit F (405 aa).

The helical transmembrane segment at Ile3–Phe23 threads the bilayer. In terms of domain architecture, 2Fe-2S ferredoxin-type spans Gly32–Val124. Cys67, Cys73, Cys76, and Cys108 together coordinate [2Fe-2S] cluster. The 141-residue stretch at Val127–Lys267 folds into the FAD-binding FR-type domain. A catalytic region spans residues Asp270 to Met387.

This sequence belongs to the NqrF family. Composed of six subunits; NqrA, NqrB, NqrC, NqrD, NqrE and NqrF. [2Fe-2S] cluster is required as a cofactor. The cofactor is FAD.

Its subcellular location is the cell inner membrane. It catalyses the reaction a ubiquinone + n Na(+)(in) + NADH + H(+) = a ubiquinol + n Na(+)(out) + NAD(+). Its function is as follows. NQR complex catalyzes the reduction of ubiquinone-1 to ubiquinol by two successive reactions, coupled with the transport of Na(+) ions from the cytoplasm to the periplasm. The first step is catalyzed by NqrF, which accepts electrons from NADH and reduces ubiquinone-1 to ubisemiquinone by a one-electron transfer pathway. The protein is Na(+)-translocating NADH-quinone reductase subunit F of Neisseria meningitidis serogroup B (strain ATCC BAA-335 / MC58).